The following is a 165-amino-acid chain: Type 3 secretion system regulator YopR (165 aa).

Belongs to the YopR family.

It is found in the secreted. May be involved in the regulation of the assembly of the type III secretion system (T3SS), also called injectisome, which is used to inject bacterial effector proteins into eukaryotic host cells. May control the secretion and/or polymerization of YscF/SctF, the principal component of the needle filament, thereby impacting the assembly of the T3SS. Involved in pathogenesis. The chain is Type 3 secretion system regulator YopR from Yersinia pestis.